The chain runs to 31 residues: VIGGQECARDSHPWQAAVYHFSDIECGGVLV.

Residues 1–31 (VIGGQECARDSHPWQAAVYHFSDIECGGVLV) enclose the Peptidase S1 domain.

It belongs to the peptidase S1 family. Kallikrein subfamily.

The enzyme catalyses Preferential cleavage of Arg-|-Xaa bonds in small molecule substrates. Highly selective action to release kallidin (lysyl-bradykinin) from kininogen involves hydrolysis of Met-|-Xaa or Leu-|-Xaa.. Its function is as follows. Glandular kallikreins cleave Met-Lys and Arg-Ser bonds in kininogen to release Lys-bradykinin. The chain is Kallikrein-1 from Cavia porcellus (Guinea pig).